The following is a 153-amino-acid chain: Transcriptional repressor NrdR (153 aa).

The segment at 3–34 (CPYCGYEDSKVIDTRPADEGRTIKRRRECLKC) is a zinc-finger region. Positions 49–139 (ILVIKKDNRR…VYRQFKDINT (91 aa)) constitute an ATP-cone domain.

This sequence belongs to the NrdR family. Zn(2+) is required as a cofactor.

Negatively regulates transcription of bacterial ribonucleotide reductase nrd genes and operons by binding to NrdR-boxes. The chain is Transcriptional repressor NrdR from Caldicellulosiruptor saccharolyticus (strain ATCC 43494 / DSM 8903 / Tp8T 6331).